The following is a 336-amino-acid chain: Immune-associated nucleotide-binding protein 13 (336 aa).

In terms of domain architecture, AIG1-type G spans 15–221 (KPERTLVLLG…YMADLSHELR (207 aa)). The interval 24–31 (GRTGNGKS) is G1. GTP is bound by residues 24-32 (GRTGNGKSA) and Ser45. The interval 51-55 (FITKE) is G2. The G3 stretch occupies residues 73 to 76 (DTPG). The tract at residues 143 to 146 (TNED) is G4. The interval 179–181 (DNS) is G5. Residue Asn180 participates in GTP binding. The stretch at 265–328 (KEKISNQLKE…EKETASLRTE (64 aa)) forms a coiled coil.

It belongs to the TRAFAC class TrmE-Era-EngA-EngB-Septin-like GTPase superfamily. AIG1/Toc34/Toc159-like paraseptin GTPase family. IAN subfamily. In terms of tissue distribution, expressed in pollen grains.

The chain is Immune-associated nucleotide-binding protein 13 from Arabidopsis thaliana (Mouse-ear cress).